The primary structure comprises 146 residues: ATP synthase epsilon chain (146 aa).

Positions 103-124 are disordered; it reads QAERELGQLPEEEDEDSRRARE.

Belongs to the ATPase epsilon chain family. F-type ATPases have 2 components, CF(1) - the catalytic core - and CF(0) - the membrane proton channel. CF(1) has five subunits: alpha(3), beta(3), gamma(1), delta(1), epsilon(1). CF(0) has three main subunits: a, b and c.

The protein resides in the cell membrane. In terms of biological role, produces ATP from ADP in the presence of a proton gradient across the membrane. The protein is ATP synthase epsilon chain of Rubrobacter xylanophilus (strain DSM 9941 / JCM 11954 / NBRC 16129 / PRD-1).